The primary structure comprises 1459 residues: PPE family protein PPE34 (1459 aa).

This sequence belongs to the mycobacterial PPE family. As to quaternary structure, interacts with human TLR2.

Its subcellular location is the cell membrane. It localises to the secreted. It is found in the cell wall. The protein resides in the cell surface. Facilitates a shift in the ensuing immunity toward the Th2 phenotype and could aid in immune evasion by mycobacteria. Interacts with human Toll-like receptor 2 (TLR2) and triggers functional maturation of human dendritic cells (DCs), leading to secretion of IL-4, IL-5 and IL-10 from CD4(+) T cells and induction of Th2 immune response. Maturation of DCs involves PI3K, ERK1/2, p38 MAPK and NF-kappa-B signaling pathways. This is PPE family protein PPE34 from Mycobacterium tuberculosis (strain ATCC 25618 / H37Rv).